We begin with the raw amino-acid sequence, 153 residues long: Interleukin-2 (153 aa).

Residues 1–20 (MYRMQLLSCIALSLALVTNS) form the signal peptide. The O-linked (GalNAc...) threonine glycan is linked to Thr-23. An intrachain disulfide couples Cys-78 to Cys-125.

The protein belongs to the IL-2 family.

It localises to the secreted. In terms of biological role, cytokine produced by activated CD4-positive helper T-cells and to a lesser extend activated CD8-positive T-cells and natural killer (NK) cells that plays pivotal roles in the immune response and tolerance. Binds to a receptor complex composed of either the high-affinity trimeric IL-2R (IL2RA/CD25, IL2RB/CD122 and IL2RG/CD132) or the low-affinity dimeric IL-2R (IL2RB and IL2RG). Interaction with the receptor leads to oligomerization and conformation changes in the IL-2R subunits resulting in downstream signaling starting with phosphorylation of JAK1 and JAK3. In turn, JAK1 and JAK3 phosphorylate the receptor to form a docking site leading to the phosphorylation of several substrates including STAT5. This process leads to activation of several pathways including STAT, phosphoinositide-3-kinase/PI3K and mitogen-activated protein kinase/MAPK pathways. Functions as a T-cell growth factor and can increase NK-cell cytolytic activity as well. Promotes strong proliferation of activated B-cells and subsequently immunoglobulin production. Plays a pivotal role in regulating the adaptive immune system by controlling the survival and proliferation of regulatory T-cells, which are required for the maintenance of immune tolerance. Moreover, participates in the differentiation and homeostasis of effector T-cell subsets, including Th1, Th2, Th17 as well as memory CD8-positive T-cells. The protein is Interleukin-2 (IL2) of Homo sapiens (Human).